A 300-amino-acid polypeptide reads, in one-letter code: Acetylglutamate kinase (300 aa).

Substrate contacts are provided by residues 72 to 73, arginine 94, and asparagine 197; that span reads GG.

Belongs to the acetylglutamate kinase family. ArgB subfamily.

It is found in the cytoplasm. The enzyme catalyses N-acetyl-L-glutamate + ATP = N-acetyl-L-glutamyl 5-phosphate + ADP. Its pathway is amino-acid biosynthesis; L-arginine biosynthesis; N(2)-acetyl-L-ornithine from L-glutamate: step 2/4. Functionally, catalyzes the ATP-dependent phosphorylation of N-acetyl-L-glutamate. The protein is Acetylglutamate kinase of Azoarcus sp. (strain BH72).